Here is a 188-residue protein sequence, read N- to C-terminus: MSIKSDKWIRRMAEQHGMIEPFEPGQVRESDGRKIVSYGTSSYGYDIRCADEFKIFTNINSTIVDPKNFDEKSFVDFKGDVCIIPPNSFALARTMEYFRIPRSVLTICLGKSTYARCGIIVNVTPFEPEWEGYVTLEFSNTTPLPAKIYAGEGCAQVLFFESDEICETSYADRGGKYQGQQGVTLPKT.

DCTP is bound by residues 111 to 116, 135 to 137, Q156, Y170, and Q180; these read KSTYAR and TLE. E137 acts as the Proton donor/acceptor in catalysis.

Belongs to the dCTP deaminase family. Homotrimer.

It catalyses the reaction dCTP + H2O + H(+) = dUTP + NH4(+). The protein operates within pyrimidine metabolism; dUMP biosynthesis; dUMP from dCTP (dUTP route): step 1/2. In terms of biological role, catalyzes the deamination of dCTP to dUTP. This chain is dCTP deaminase, found in Cupriavidus metallidurans (strain ATCC 43123 / DSM 2839 / NBRC 102507 / CH34) (Ralstonia metallidurans).